The sequence spans 180 residues: Large ribosomal subunit protein uL10 (180 aa).

Belongs to the universal ribosomal protein uL10 family. Part of the ribosomal stalk of the 50S ribosomal subunit. The N-terminus interacts with L11 and the large rRNA to form the base of the stalk. The C-terminus forms an elongated spine to which L12 dimers bind in a sequential fashion forming a multimeric L10(L12)X complex.

Its function is as follows. Forms part of the ribosomal stalk, playing a central role in the interaction of the ribosome with GTP-bound translation factors. The chain is Large ribosomal subunit protein uL10 from Thermosipho africanus (strain TCF52B).